Here is a 243-residue protein sequence, read N- to C-terminus: MDGFDVSQAPPEYQAIKPLADLFVVGMGVGWIINYIGMVYISFKHETYGMSIMPLCCNIAWELVYCLVFPSKSPVERGVFWMGLLINFGVMYAAITFSSREWGHAPLVERNISLIFFVATMGFLSGHVALALEIGPALAYSWGAVICQLLLSVGGLSQLLCRGSTRGASYTLWASRFLGSTCTVGFAGLRWMYWSEAFGWLNSPLVLWSLVVFLSIDGFYGICFWYVDRNEKSLGISGPKKAN.

The next 7 membrane-spanning stretches (helical) occupy residues 23–43, 49–69, 78–98, 112–132, 134–154, 172–194, and 205–225; these read FVVGMGVGWIINYIGMVYISF, GMSIMPLCCNIAWELVYCLVF, GVFWMGLLINFGVMYAAITFS, ISLIFFVATMGFLSGHVALAL, IGPALAYSWGAVICQLLLSVG, LWASRFLGSTCTVGFAGLRWMYW, and LVLWSLVVFLSIDGFYGICFW.

Belongs to the paxB family.

It localises to the membrane. Its pathway is secondary metabolite biosynthesis. Its function is as follows. Terpene cyclase; part of the ATM2 gene cluster that mediates the biosynthesis of paxilline, a mycotoxin that acts as an inhibitor of mammalian maxi-K channels. PaxG, the geranylgeranyl diphosphate (GGPP) synthase is proposed to catalyze the first step in paxilline biosynthesis. Condensation of indole-3-glycerol phosphate with GGPP by paxC then forms 3-geranylgeranylindole (3-GGI), followed by epoxidation and cyclization of this intermediate (by paxM and paxB) to form paspaline. Paspaline is subsequently converted to 13-desoxypaxilline by paxP, the latter being then converted to paxilline by paxQ. Finally paxilline can be mono- and di-prenylated by paxD. The chain is Terpene cyclase paxB from Penicillium paxilli.